The primary structure comprises 717 residues: Probable cyclic nucleotide-gated ion channel 5 (717 aa).

Over 1 to 102 (MAGKRENFVR…DKFLLYCNKL (102 aa)) the chain is Cytoplasmic. The chain crosses the membrane as a helical span at residues 103 to 123 (FVASCILSVFVDPFFFYLPVI). Residues 124–136 (NAESKCLGIDRKL) lie on the Extracellular side of the membrane. Residues 137–157 (AITASTLRTFIDVFYLAHMAL) traverse the membrane as a helical segment. The Cytoplasmic segment spans residues 158–190 (QLRTAYIAPSSRVFGRGELVIDPAQIAKRYLQR). The chain crosses the membrane as a helical span at residues 191 to 211 (WFIIDFLSVLPLPQIVVWRFL). The Extracellular portion of the chain corresponds to 212–224 (QSSNGSDVLATKQ). Residues 225-245 (ALLFIVLVQYIPRFLRVLPLT) form a helical membrane-spanning segment. The Cytoplasmic segment spans residues 246–265 (SELKRTAGVFAETAWAGAAY). A helical membrane pass occupies residues 266-286 (YLLLYMLASHIVGAFWYLLAL). Residues 287-391 (ERNDACWQEA…GQGLETSTYP (105 aa)) are Extracellular-facing. A helical transmembrane segment spans residues 392 to 412 (MEIIFSISLAISGLILFALLI). Over 413 to 717 (GNMQTYLQSL…KPPEPDFTAD (305 aa)) the chain is Cytoplasmic. Residues 498 to 628 (LFKS…TFRF) and glutamate 569 each bind a nucleoside 3',5'-cyclic phosphate. The tract at residues 614 to 629 (FRRLHSRQVQHTFRFY) is calmodulin-binding. The 30-residue stretch at 634-663 (RTWAACFIQAAWRRYCKRKKMEEAEAEAAA) folds into the IQ domain.

This sequence belongs to the cyclic nucleotide-gated cation channel (TC 1.A.1.5) family. As to quaternary structure, homotetramer or heterotetramer.

It localises to the cell membrane. Probable cyclic nucleotide-gated ion channel. The chain is Probable cyclic nucleotide-gated ion channel 5 (CNGC5) from Arabidopsis thaliana (Mouse-ear cress).